Consider the following 574-residue polypeptide: E3 ubiquitin-protein ligase TRIM23 (574 aa).

Residues 31-76 (CGVCEDVFSLQGDKVPRLLLCGHTVCHDCLTRLPLHGRAIRCPFDR) form an RING-type; degenerate zinc finger. Residues 122-168 (ESIIRCDEDEAHVASVYCTVCATHLCSDCSQVTHSTKTLAKHRRVPL) form a B box-type; degenerate zinc finger. Residues 352 to 379 (RVVLAKQEITRLLETLQKQQQQFTEVAD) are a coiled coil. The tract at residues 390–574 (TFTKDNRVHI…LVAAGVLDVA (185 aa)) is ARF-like. GTP is bound by residues 411–418 (GLDGAGKT), 454–458 (DVGGK), and 513–516 (NKQD).

It in the C-terminal section; belongs to the small GTPase superfamily. Arf family. In terms of assembly, homodimer. Interacts with PSCD1. Interacts with UBE2D2. Interacts with TBK1 (via N-terminal kinase domain) and p62/SQSTM1.

The protein resides in the cytoplasm. It localises to the endomembrane system. It is found in the golgi apparatus membrane. The protein localises to the lysosome membrane. The enzyme catalyses S-ubiquitinyl-[E2 ubiquitin-conjugating enzyme]-L-cysteine + [acceptor protein]-L-lysine = [E2 ubiquitin-conjugating enzyme]-L-cysteine + N(6)-ubiquitinyl-[acceptor protein]-L-lysine.. It participates in protein modification; protein ubiquitination. Functionally, acts as an E3 ubiquitin-protein ligase. Plays an essential role in autophagy activation during viral infection. Mechanistically, activates TANK-binding kinase 1/TBK1 by facilitating its dimerization and ability to phosphorylate the selective autophagy receptor SQSTM1. In order to achieve this function, TRIM23 mediates 'Lys-27'-linked auto-ubiquitination of its ADP-ribosylation factor (ARF) domain to induce its GTPase activity and its recruitment to autophagosomes. The protein is E3 ubiquitin-protein ligase TRIM23 (Trim23) of Mus musculus (Mouse).